The following is a 156-amino-acid chain: MPRKGPAPKRPLVNDPVYGSQLVTQLVNKVLLQGKKSLAERIVYGALEQARDNTGTDPVITLKRALDNVKPVLEVRSRRVGGATYQVPVEVRPDRSTTLALRWLVGYSRQRREKTMIERLANEILDASNGLGASVKRREDTHKMAEANRAFAHYRW.

It belongs to the universal ribosomal protein uS7 family. Part of the 30S ribosomal subunit. Contacts proteins S9 and S11.

Its function is as follows. One of the primary rRNA binding proteins, it binds directly to 16S rRNA where it nucleates assembly of the head domain of the 30S subunit. Is located at the subunit interface close to the decoding center, probably blocks exit of the E-site tRNA. The polypeptide is Small ribosomal subunit protein uS7 (Mycobacterium ulcerans (strain Agy99)).